The primary structure comprises 339 residues: Phenylalanine--tRNA ligase alpha subunit (339 aa).

Glutamate 254 contacts Mg(2+).

The protein belongs to the class-II aminoacyl-tRNA synthetase family. Phe-tRNA synthetase alpha subunit type 1 subfamily. As to quaternary structure, tetramer of two alpha and two beta subunits. The cofactor is Mg(2+).

It is found in the cytoplasm. The enzyme catalyses tRNA(Phe) + L-phenylalanine + ATP = L-phenylalanyl-tRNA(Phe) + AMP + diphosphate + H(+). This Alkaliphilus oremlandii (strain OhILAs) (Clostridium oremlandii (strain OhILAs)) protein is Phenylalanine--tRNA ligase alpha subunit.